The chain runs to 149 residues: 3-dehydroquinate dehydratase (149 aa).

Tyr-23 functions as the Proton acceptor in the catalytic mechanism. Substrate contacts are provided by Asn-75, His-81, and Asp-88. Catalysis depends on His-101, which acts as the Proton donor. Substrate-binding positions include 102–103 (MS) and Arg-112.

Belongs to the type-II 3-dehydroquinase family. As to quaternary structure, homododecamer.

The catalysed reaction is 3-dehydroquinate = 3-dehydroshikimate + H2O. It functions in the pathway metabolic intermediate biosynthesis; chorismate biosynthesis; chorismate from D-erythrose 4-phosphate and phosphoenolpyruvate: step 3/7. Catalyzes a trans-dehydration via an enolate intermediate. The protein is 3-dehydroquinate dehydratase of Pelobacter propionicus (strain DSM 2379 / NBRC 103807 / OttBd1).